We begin with the raw amino-acid sequence, 314 residues long: Vomeronasal type-1 receptor 98 (314 aa).

At 1 to 19 (MNKDTTMYCSAYIRDVFFC) the chain is on the extracellular side. Residues 20 to 40 (EIGVGISANSCLLLFHIFMFI) traverse the membrane as a helical segment. Residues 41-49 (RGHRPRLTD) are Cytoplasmic-facing. Residues 50–70 (LPIGLMALIHLLMLLLAAYIA) form a helical membrane-spanning segment. The Extracellular segment spans residues 71-92 (KDFFMSSGWDDITCKLFIFLHR). A disulfide bond links Cys-84 and Cys-171. Residues 93 to 113 (FFRSLSVCATCMLSVFQTIIL) form a helical membrane-spanning segment. Residues 114 to 133 (CPQSSHLAKFKPNSPYHLSC) lie on the Cytoplasmic side of the membrane. The helical transmembrane segment at 134–154 (FFIFMSIFYTSISSHILIAAI) threads the bilayer. Over 155-186 (ATQNLTSVNLIYITKSCSFLPMSSSMQRTFST) the chain is Extracellular. Asn-158 carries N-linked (GlcNAc...) asparagine glycosylation. The chain crosses the membrane as a helical span at residues 187 to 207 (LLAFRNAFLIGLMGLSTCYMA). The Cytoplasmic segment spans residues 208–235 (TLLCRHKTRSQRLQNSKLSPKATPEQRA). The helical transmembrane segment at 236 to 256 (IWTLLMFMSFFLVMSTFDSII) threads the bilayer. Topologically, residues 257-268 (SYSRTIFQGNPS) are extracellular. Residues 269 to 289 (LYCAQILVAHSYAVVSPMLVL) traverse the membrane as a helical segment. Residues 290–314 (SNENRLTNPLISMYERIVRLDFLCW) are Cytoplasmic-facing.

This sequence belongs to the G-protein coupled receptor 1 family.

The protein localises to the cell membrane. In terms of biological role, putative pheromone receptor implicated in the regulation of social as well as reproductive behavior. The sequence is that of Vomeronasal type-1 receptor 98 (Vom1r98) from Rattus norvegicus (Rat).